The chain runs to 277 residues: Bifunctional protein FolD (277 aa).

NADP(+)-binding positions include 156 to 158, Ser-183, and Ile-224; that span reads GRS.

Belongs to the tetrahydrofolate dehydrogenase/cyclohydrolase family. In terms of assembly, homodimer.

It carries out the reaction (6R)-5,10-methylene-5,6,7,8-tetrahydrofolate + NADP(+) = (6R)-5,10-methenyltetrahydrofolate + NADPH. It catalyses the reaction (6R)-5,10-methenyltetrahydrofolate + H2O = (6R)-10-formyltetrahydrofolate + H(+). The protein operates within one-carbon metabolism; tetrahydrofolate interconversion. Catalyzes the oxidation of 5,10-methylenetetrahydrofolate to 5,10-methenyltetrahydrofolate and then the hydrolysis of 5,10-methenyltetrahydrofolate to 10-formyltetrahydrofolate. The sequence is that of Bifunctional protein FolD from Kosmotoga olearia (strain ATCC BAA-1733 / DSM 21960 / TBF 19.5.1).